Here is a 475-residue protein sequence, read N- to C-terminus: AP-1 complex subunit mu-1-I (475 aa).

Residues 175–473 (KNEAFLDIVE…TQSGDDYTIR (299 aa)) form the MHD domain. A disordered region spans residues 240 to 262 (ASATTSDNNTETDKKPSITSSSA).

This sequence belongs to the adaptor complexes medium subunit family. As to quaternary structure, adaptor protein complex 1 (AP-1) is a heterotetramer composed of two large adaptins (gamma-type subunit APL4 and beta-type subunit APL2), a medium adaptin (mu-type subunit APM1) and a small adaptin (sigma-type subunit APS1). AP-1 interacts with clathrin.

It is found in the cytoplasmic vesicle. Its subcellular location is the clathrin-coated vesicle membrane. The protein resides in the membrane. The protein localises to the clathrin-coated pit. Its function is as follows. Component of the adaptor complexes which link clathrin to receptors in coated vesicles. Clathrin-associated protein complexes are believed to interact with the cytoplasmic tails of membrane proteins, leading to their selection and concentration. The AP-1 complex interacts directly with clathrin. AP57 is probably a subunit of the Golgi membrane adaptor. The protein is AP-1 complex subunit mu-1-I (APM1) of Saccharomyces cerevisiae (strain ATCC 204508 / S288c) (Baker's yeast).